The primary structure comprises 465 residues: Siroheme synthase (465 aa).

Residues 1-203 (MDFLPLFHSL…GRPAEAERLL (203 aa)) are precorrin-2 dehydrogenase /sirohydrochlorin ferrochelatase. Residues 22-23 (EV) and 43-44 (PQ) contribute to the NAD(+) site. Residue serine 128 is modified to Phosphoserine. Positions 217–465 (GEVYLVGAGP…AWFEGAREDA (249 aa)) are uroporphyrinogen-III C-methyltransferase. Proline 226 is a binding site for S-adenosyl-L-methionine. The active-site Proton acceptor is the aspartate 249. The Proton donor role is filled by lysine 271. Residues 302–304 (GGD), isoleucine 307, 332–333 (TA), methionine 384, and glycine 413 contribute to the S-adenosyl-L-methionine site.

This sequence in the N-terminal section; belongs to the precorrin-2 dehydrogenase / sirohydrochlorin ferrochelatase family. It in the C-terminal section; belongs to the precorrin methyltransferase family.

It carries out the reaction uroporphyrinogen III + 2 S-adenosyl-L-methionine = precorrin-2 + 2 S-adenosyl-L-homocysteine + H(+). The enzyme catalyses precorrin-2 + NAD(+) = sirohydrochlorin + NADH + 2 H(+). The catalysed reaction is siroheme + 2 H(+) = sirohydrochlorin + Fe(2+). Its pathway is cofactor biosynthesis; adenosylcobalamin biosynthesis; precorrin-2 from uroporphyrinogen III: step 1/1. It participates in cofactor biosynthesis; adenosylcobalamin biosynthesis; sirohydrochlorin from precorrin-2: step 1/1. It functions in the pathway porphyrin-containing compound metabolism; siroheme biosynthesis; precorrin-2 from uroporphyrinogen III: step 1/1. The protein operates within porphyrin-containing compound metabolism; siroheme biosynthesis; siroheme from sirohydrochlorin: step 1/1. Its pathway is porphyrin-containing compound metabolism; siroheme biosynthesis; sirohydrochlorin from precorrin-2: step 1/1. Multifunctional enzyme that catalyzes the SAM-dependent methylations of uroporphyrinogen III at position C-2 and C-7 to form precorrin-2 via precorrin-1. Then it catalyzes the NAD-dependent ring dehydrogenation of precorrin-2 to yield sirohydrochlorin. Finally, it catalyzes the ferrochelation of sirohydrochlorin to yield siroheme. The sequence is that of Siroheme synthase from Pseudomonas aeruginosa (strain UCBPP-PA14).